The following is a 1153-amino-acid chain: AP-3 complex subunit delta-1 (1153 aa).

A2 bears the N-acetylalanine mark. HEAT repeat units follow at residues 34–71 (KYISQCIDEIKQELKQDNIAVKANAVCKLTYLQMLGYD), 77–114 (FNIIEVMSASKFTFKRIGYLAASQSFHEGTDVIMLTTN), 142–179 (DLARDLANDIMTLMSHTKPYIRKKAVLIMYKVFLKYPE), 180–216 (SLRPAFPRLKEKLEDPDPGVQSAAVNVICELARRNPK), 254–292 (RLGKKLIEPLTNLIHSTSAMSLLYECVNTVIAVLISLSS), 299–336 (ASIQLCVQKLRILIEDSDQNLKYLGLLAMSKILKTHPK), 338–373 (VQSHKDLILQCLDDKDESIRLRALDLLYGMVSKKNL), 375–409 (EIVKKLMTHVDKAEGTTYRDELLTKIIDICSQSNY), 431–468 (TRHGHLIAAQMLDVAIRVKAIRKFAVSQMSALLDSAHL), 497–535 (QEPHHTLEAMLRPRVTTLPGHIQAVYVQNVVKLYASILQ), and 548–585 (AVTQLMVDRLPQFVQSADLEVQERASCILQLVKHIQKL). Disordered stretches follow at residues 629–696 (EPLS…YQDT) and 726–920 (KLEE…PPES). S632, S634, S636, and S658 each carry phosphoserine. Residues 639–675 (ERPRAVFHEEEQRRPKHRPSEADEEELARRREARKQE) are compositionally biased toward basic and acidic residues. Residues 659–679 (EADEEELARRREARKQEQANN) adopt a coiled-coil conformation. S688 is modified (phosphoserine). Positions 725 to 756 (VKLEEERRHRQKLEKDKRRKKRKEKEKKGKRR) form a coiled coil. Over residues 726 to 740 (KLEEERRHRQKLEKD) the composition is skewed to basic and acidic residues. The span at 741 to 758 (KRRKKRKEKEKKGKRRHS) shows a compositional bias: basic residues. Residues S758 and S759 each carry the phosphoserine modification. At T762 the chain carries Phosphothreonine. Phosphoserine occurs at positions 764, 785, 788, 828, and 829. Positions 777-794 (VTEEMPENALPSDEDDKD) are enriched in acidic residues. Positions 795–839 (PNDPYRALDIDLDKPLADSEKLPIQKHRNTETSKSPEKDVPMVEK) are enriched in basic and acidic residues. Composition is skewed to basic residues over residues 840 to 853 (KSKKPKKKEKKHKE) and 863 to 879 (EKEKKKSPKPKKKKHRK). Residues 845–869 (KKKEKKHKEKERDKEKKKEKEKKKS) are a coiled coil. Residue V931 is modified to Phosphoserine.

The protein belongs to the adaptor complexes large subunit family. In terms of assembly, AP-3 associates with the BLOC-1 complex. Adaptor protein complex 3 (AP-3) is a heterotetramer composed of two large adaptins (delta-type subunit AP3D1 and beta-type subunit AP3B1 or AP3B2), a medium adaptin (mu-type subunit AP3M1 or AP3M2) and a small adaptin (sigma-type subunit APS1 or AP3S2). Interacts with SLC30A2. Interacts with CLN3 (via dileucine motif); this interaction facilitates lysosomal targeting. Present in all adult tissues examined with the highest levels in skeletal muscle, heart, pancreas and testis.

The protein resides in the cytoplasm. Its subcellular location is the golgi apparatus membrane. Its function is as follows. Part of the AP-3 complex, an adaptor-related complex which is not clathrin-associated. The complex is associated with the Golgi region as well as more peripheral structures. It facilitates the budding of vesicles from the Golgi membrane and may be directly involved in trafficking to lysosomes. Involved in process of CD8+ T-cell and NK cell degranulation. In concert with the BLOC-1 complex, AP-3 is required to target cargos into vesicles assembled at cell bodies for delivery into neurites and nerve terminals. In Homo sapiens (Human), this protein is AP-3 complex subunit delta-1 (AP3D1).